The sequence spans 645 residues: Sodium-dependent phosphate transporter 2 (645 aa).

Residues 1–5 (MAMDE) lie on the Extracellular side of the membrane. A helical membrane pass occupies residues 6 to 26 (YLWMVILGFIIAFILAFSVGA). Over 27 to 46 (NDVANSFGTAVGSGVVTLRQ) the chain is Cytoplasmic. A helical membrane pass occupies residues 47–67 (ACILASIFETTGSVLLGAKVG). Residues 68 to 86 (ETIRKGIIDVNLYNNTVET) lie on the Extracellular side of the membrane. Residue Asn-81 is glycosylated (N-linked (GlcNAc...) asparagine). The helical transmembrane segment at 87-107 (LMAGEVSAMVGSAVWQLIASF) threads the bilayer. The Cytoplasmic portion of the chain corresponds to 108-109 (LR). The helical transmembrane segment at 110 to 130 (FPISGTHCIVGATIGFSLVAI) threads the bilayer. Residues 131-142 (GTQGVQWMELVK) are Extracellular-facing. A helical membrane pass occupies residues 143 to 163 (IVASWFISPLLSGFMSGVLFV). At 164–190 (LIRMFILKKEDPVPNGLRALPVFYAAT) the chain is on the cytoplasmic side. The helical transmembrane segment at 191-211 (IAINVFSIMYTGAPVMGLVLP) threads the bilayer. Topologically, residues 212–213 (MW) are extracellular. The helical transmembrane segment at 214–234 (AIALISFGVALLFALFVWLFV) threads the bilayer. Topologically, residues 235-475 (CPWMRRKITG…EEKEEKDSPE (241 aa)) are cytoplasmic. Ser-253, Ser-256, Ser-259, Ser-268, Ser-316, and Ser-379 each carry phosphoserine. The disordered stretch occupies residues 275-320 (PGAKAHDDSTVPLTGSAADPSGTSESMSGGHHPRAPYGRALSMTHG). Residues 448-471 (RLAPPLAEPEPPRDDPADEEKEEK) are disordered. Residues 476–496 (VHLLFHFLQVLTACFGSFAHG) traverse the membrane as a helical segment. Residues 497 to 523 (GNDVSNAIGPLVALWLIYEQGAVLQEA) are Extracellular-facing. A helical membrane pass occupies residues 524-544 (ATPVWLLFYGGVGICTGLWVW). Residues 545–564 (GRRVIQTMGKDLTPITPSSG) are Cytoplasmic-facing. The chain crosses the membrane as a helical span at residues 565–579 (FTIELASAFTVVIAS). Topologically, residues 580–586 (NIGLPVS) are extracellular. Residues 587–602 (TTHCKVGSVVAVGWIR) traverse the membrane as a helical segment. The Cytoplasmic segment spans residues 603-614 (SRKAVDWRLFRN). The chain crosses the membrane as a helical span at residues 615–635 (IFVAWFVTVPVAGLFSAAIMA). Residues 636–645 (LLIHGILPFV) lie on the Extracellular side of the membrane.

This sequence belongs to the inorganic phosphate transporter (PiT) (TC 2.A.20) family. In terms of assembly, homodimer.

It localises to the cell membrane. Its subcellular location is the apical cell membrane. It carries out the reaction 2 Na(+)(out) + phosphate(out) = 2 Na(+)(in) + phosphate(in). Sodium-phosphate symporter which preferentially transports the monovalent form of phosphate with a stoichiometry of two sodium ions per phosphate ion. Plays a critical role in the determination of bone quality and strength by providing phosphate for bone mineralization. Required to maintain normal cerebrospinal fluid phosphate levels. Mediates phosphate-induced calcification of vascular smooth muscle cells (VCMCs) and can functionally compensate for loss of SLC20A1 in VCMCs. This is Sodium-dependent phosphate transporter 2 (SLC20A2) from Bos taurus (Bovine).